Reading from the N-terminus, the 555-residue chain is Glycerol dehydratase large subunit (555 aa).

Belongs to the diol/glycerol dehydratase large subunit family. As to quaternary structure, probably consists of three subunits: large, medium, and small. Requires adenosylcob(III)alamin as cofactor.

The enzyme catalyses glycerol = 3-hydroxypropanal + H2O. This Citrobacter freundii protein is Glycerol dehydratase large subunit (dhaB).